Reading from the N-terminus, the 385-residue chain is S-adenosylmethionine synthase (385 aa).

His-16 contacts ATP. Mg(2+) is bound at residue Asp-18. Glu-44 lines the K(+) pocket. Residues Glu-57 and Gln-100 each coordinate L-methionine. A flexible loop region spans residues 100-110 (QSPDINQGVDR). ATP contacts are provided by residues 164–166 (DGK), 230–231 (KF), Asp-239, 245–246 (RK), Ala-262, and Lys-266. Asp-239 contributes to the L-methionine binding site. Lys-270 provides a ligand contact to L-methionine.

The protein belongs to the AdoMet synthase family. In terms of assembly, homotetramer; dimer of dimers. The cofactor is Mg(2+). K(+) is required as a cofactor.

The protein resides in the cytoplasm. The enzyme catalyses L-methionine + ATP + H2O = S-adenosyl-L-methionine + phosphate + diphosphate. Its pathway is amino-acid biosynthesis; S-adenosyl-L-methionine biosynthesis; S-adenosyl-L-methionine from L-methionine: step 1/1. In terms of biological role, catalyzes the formation of S-adenosylmethionine (AdoMet) from methionine and ATP. The overall synthetic reaction is composed of two sequential steps, AdoMet formation and the subsequent tripolyphosphate hydrolysis which occurs prior to release of AdoMet from the enzyme. This Helicobacter pylori (strain G27) protein is S-adenosylmethionine synthase.